We begin with the raw amino-acid sequence, 497 residues long: Cytochrome P450 26A1 (497 aa).

A heme-binding site is contributed by C442.

It belongs to the cytochrome P450 family. The cofactor is heme. As to expression, expressed in most fetal and adult tissues with highest levels in adult liver, heart, pituitary gland, adrenal gland, placenta and regions of the brain. Expressed at high levels in lung, pancreas, skin and uterus (at protein level). Lower expression level is detected in spleen, kidney, intestine and adipose tissue (at protein level).

It localises to the endoplasmic reticulum membrane. The protein resides in the microsome membrane. The enzyme catalyses all-trans-retinoate + reduced [NADPH--hemoprotein reductase] + O2 = all-trans-(4S)-hydroxyretinoate + oxidized [NADPH--hemoprotein reductase] + H2O + H(+). The catalysed reaction is all-trans-(4S)-hydroxyretinoate + reduced [NADPH--hemoprotein reductase] + O2 = all-trans-(4S,16)-dihydroxyretinoate + oxidized [NADPH--hemoprotein reductase] + H2O + H(+). It carries out the reaction all-trans-retinoate + reduced [NADPH--hemoprotein reductase] + O2 = all-trans-18-hydroxyretinoate + oxidized [NADPH--hemoprotein reductase] + H2O + H(+). Functionally, a cytochrome P450 monooxygenase involved in the metabolism of retinoates (RAs), the active metabolites of vitamin A, and critical signaling molecules in animals. RAs exist as at least four different isomers: all-trans-RA (atRA), 9-cis-RA, 13-cis-RA, and 9,13-dicis-RA, where atRA is considered to be the biologically active isomer, although 9-cis-RA and 13-cis-RA also have activity. Catalyzes the hydroxylation of atRA primarily at C-4 and C-18, thereby contributing to the regulation of atRA homeostasis and signaling. Hydroxylation of atRA limits its biological activity and initiates a degradative process leading to its eventual elimination. Involved in the convertion of atRA to all-trans-4-oxo-RA. Able to metabolize other RAs such as 9-cis, 13-cis and 9,13-di-cis RA. Can oxidize all-trans-13,14-dihydroretinoate (DRA) to metabolites which could include all-trans-4-oxo-DRA, all-trans-4-hydroxy-DRA, all-trans-5,8-epoxy-DRA, and all-trans-18-hydroxy-DRA. May play a role in the oxidative metabolism of xenobiotics such as tazarotenic acid. The chain is Cytochrome P450 26A1 from Homo sapiens (Human).